Reading from the N-terminus, the 484-residue chain is Protein nucleotidyltransferase YdiU (484 aa).

The ATP site is built by Gly-81, Gly-83, Arg-84, Lys-103, Asp-115, Gly-116, Arg-166, and Arg-173. The Proton acceptor role is filled by Asp-244. Residues Asn-245 and Asp-254 each contribute to the Mg(2+) site. Residue Asp-254 coordinates ATP.

It belongs to the SELO family. It depends on Mg(2+) as a cofactor. Mn(2+) serves as cofactor.

The enzyme catalyses L-seryl-[protein] + ATP = 3-O-(5'-adenylyl)-L-seryl-[protein] + diphosphate. It catalyses the reaction L-threonyl-[protein] + ATP = 3-O-(5'-adenylyl)-L-threonyl-[protein] + diphosphate. The catalysed reaction is L-tyrosyl-[protein] + ATP = O-(5'-adenylyl)-L-tyrosyl-[protein] + diphosphate. It carries out the reaction L-histidyl-[protein] + UTP = N(tele)-(5'-uridylyl)-L-histidyl-[protein] + diphosphate. The enzyme catalyses L-seryl-[protein] + UTP = O-(5'-uridylyl)-L-seryl-[protein] + diphosphate. It catalyses the reaction L-tyrosyl-[protein] + UTP = O-(5'-uridylyl)-L-tyrosyl-[protein] + diphosphate. Its function is as follows. Nucleotidyltransferase involved in the post-translational modification of proteins. It can catalyze the addition of adenosine monophosphate (AMP) or uridine monophosphate (UMP) to a protein, resulting in modifications known as AMPylation and UMPylation. The sequence is that of Protein nucleotidyltransferase YdiU from Shewanella sp. (strain MR-4).